A 366-amino-acid polypeptide reads, in one-letter code: Peptide chain release factor 2 (366 aa).

Residue Q251 is modified to N5-methylglutamine.

The protein belongs to the prokaryotic/mitochondrial release factor family. In terms of processing, methylated by PrmC. Methylation increases the termination efficiency of RF2.

The protein localises to the cytoplasm. Its function is as follows. Peptide chain release factor 2 directs the termination of translation in response to the peptide chain termination codons UGA and UAA. This is Peptide chain release factor 2 from Campylobacter concisus (strain 13826).